A 163-amino-acid chain; its full sequence is UPF0763 protein JJD26997_0796 (163 aa).

Belongs to the UPF0763 family.

The sequence is that of UPF0763 protein JJD26997_0796 from Campylobacter jejuni subsp. doylei (strain ATCC BAA-1458 / RM4099 / 269.97).